A 268-amino-acid polypeptide reads, in one-letter code: MQIVILKDSAEVAEYGANLIINQLKRKPDSVLGLATGSTPVSLYQRLVAANQAGAVSFEGVTSFNLDEYLGLEGSHPQSYRYFMDSQLFDAIDINKANTHVPPGDAEDPIAACEAYEAQIQAAGGIDIQLLGIGRNGHIGFNEPSSGLMSRTRVKTLTQATIEDNARFFAEGEYQPHLSITMGIGTILDAKKVLLLATGESKADAIRAAVEGALSAACPASALQLHRDAVLVIDEAAASKLADKEFYRHIEAENQLLQARLAALKAGE.

D67 functions as the Proton acceptor; for enolization step in the catalytic mechanism. Residue N136 is the For ring-opening step of the active site. The Proton acceptor; for ring-opening step role is filled by H138. E143 acts as the For ring-opening step in catalysis.

This sequence belongs to the glucosamine/galactosamine-6-phosphate isomerase family. NagB subfamily. As to quaternary structure, homohexamer.

The catalysed reaction is alpha-D-glucosamine 6-phosphate + H2O = beta-D-fructose 6-phosphate + NH4(+). The protein operates within amino-sugar metabolism; N-acetylneuraminate degradation; D-fructose 6-phosphate from N-acetylneuraminate: step 5/5. Catalyzes the reversible isomerization-deamination of glucosamine 6-phosphate (GlcN6P) to form fructose 6-phosphate (Fru6P) and ammonium ion. The polypeptide is Glucosamine-6-phosphate deaminase (Shewanella loihica (strain ATCC BAA-1088 / PV-4)).